Here is a 500-residue protein sequence, read N- to C-terminus: Lysine--tRNA ligase (500 aa).

The Mg(2+) site is built by Glu-410 and Glu-417.

This sequence belongs to the class-II aminoacyl-tRNA synthetase family. Homodimer. It depends on Mg(2+) as a cofactor.

Its subcellular location is the cytoplasm. It catalyses the reaction tRNA(Lys) + L-lysine + ATP = L-lysyl-tRNA(Lys) + AMP + diphosphate. The polypeptide is Lysine--tRNA ligase (Shewanella putrefaciens (strain CN-32 / ATCC BAA-453)).